The chain runs to 497 residues: Putative endothelial lipase (497 aa).

The first 23 residues, 1–23 (MRACPFLLLLLLPLLLSLGRIAA), serve as a signal peptide directing secretion. A disulfide bridge connects residues Cys73 and Cys86. N-linked (GlcNAc...) asparagine glycans are attached at residues Asn89 and Asn145. Ser178 functions as the Nucleophile in the catalytic mechanism. The Charge relay system role is filled by Asp202. The cysteines at positions 262 and 282 are disulfide-linked. His284 acts as the Charge relay system in catalysis. 2 disulfide bridges follow: Cys307-Cys326 and Cys318-Cys321. 335-347 (KMRNKRNSKMYLK) lines the heparin pocket. The PLAT domain maps to 357-492 (FHYQLKIHVF…CLKMVKVEKH (136 aa)). Asn403 is a glycosylation site (N-linked (GlcNAc...) asparagine).

Belongs to the AB hydrolase superfamily. Lipase family. As to quaternary structure, head to tail homodimer. As to expression, expressed by the venom gland.

It is found in the secreted. The enzyme catalyses a triacylglycerol + H2O = a diacylglycerol + a fatty acid + H(+). Its activity is regulated as follows. Inhibited by serum. Has phospholipase and triglyceride lipase activities. This is Putative endothelial lipase from Crotalus adamanteus (Eastern diamondback rattlesnake).